The following is a 205-amino-acid chain: Holliday junction branch migration complex subunit RuvA (205 aa).

The domain I stretch occupies residues 1-65 (MIAKLKGILD…EDRIHLFGFL (65 aa)). Residues 66 to 144 (DNTEKVAFNM…NINTIANNTS (79 aa)) form a domain II region. The segment at 145–153 (LAILSTDSN) is flexible linker. The domain III stretch occupies residues 154–205 (THDNILSDAITALIALGISRAEATQILSDIYALFPSISVNELVRTALQRRAK).

This sequence belongs to the RuvA family. As to quaternary structure, homotetramer. Forms an RuvA(8)-RuvB(12)-Holliday junction (HJ) complex. HJ DNA is sandwiched between 2 RuvA tetramers; dsDNA enters through RuvA and exits via RuvB. An RuvB hexamer assembles on each DNA strand where it exits the tetramer. Each RuvB hexamer is contacted by two RuvA subunits (via domain III) on 2 adjacent RuvB subunits; this complex drives branch migration. In the full resolvosome a probable DNA-RuvA(4)-RuvB(12)-RuvC(2) complex forms which resolves the HJ.

It is found in the cytoplasm. Functionally, the RuvA-RuvB-RuvC complex processes Holliday junction (HJ) DNA during genetic recombination and DNA repair, while the RuvA-RuvB complex plays an important role in the rescue of blocked DNA replication forks via replication fork reversal (RFR). RuvA specifically binds to HJ cruciform DNA, conferring on it an open structure. The RuvB hexamer acts as an ATP-dependent pump, pulling dsDNA into and through the RuvAB complex. HJ branch migration allows RuvC to scan DNA until it finds its consensus sequence, where it cleaves and resolves the cruciform DNA. This Orientia tsutsugamushi (strain Boryong) (Rickettsia tsutsugamushi) protein is Holliday junction branch migration complex subunit RuvA.